Here is a 122-residue protein sequence, read N- to C-terminus: Large ribosomal subunit protein uL14 (122 aa).

This sequence belongs to the universal ribosomal protein uL14 family. In terms of assembly, part of the 50S ribosomal subunit. Forms a cluster with proteins L3 and L19. In the 70S ribosome, L14 and L19 interact and together make contacts with the 16S rRNA in bridges B5 and B8.

Functionally, binds to 23S rRNA. Forms part of two intersubunit bridges in the 70S ribosome. The chain is Large ribosomal subunit protein uL14 from Shewanella sp. (strain ANA-3).